We begin with the raw amino-acid sequence, 154 residues long: Bacterial ferritin (154 aa).

Residues 1–145 form the Ferritin-like diiron domain; the sequence is MQGNQAVVDY…QQLRLIELIG (145 aa). Residues Glu18, Glu51, His54, Glu93, Glu127, and His130 each coordinate Fe cation.

Belongs to the bacterioferritin family. As to quaternary structure, heterooligomer of 24 subunits, arranged as 12 dimers, that are packed together to form an approximately spherical molecule with a central cavity, in which large amounts of iron can be deposited.

The catalysed reaction is 4 Fe(2+) + O2 + 4 H(+) = 4 Fe(3+) + 2 H2O. It catalyses the reaction Fe(2+)(in) = Fe(2+)(out). Functionally, iron-storage protein, whose ferroxidase center binds Fe(2+), oxidizes it using dioxygen to Fe(3+), and participates in the subsequent Fe(3+) oxide mineral core formation within the central cavity of the BFR protein shell. This chain is Bacterial ferritin (bfrA), found in Neisseria meningitidis serogroup A / serotype 4A (strain DSM 15465 / Z2491).